The sequence spans 116 residues: Spexin (116 aa).

An N-terminal signal peptide occupies residues 1 to 26 (MKGLRSLAATTLALFLVFVFLGNSSC). Positions 27–35 (APQRLLERR) are excised as a propeptide. Q49 is modified (glutamine amide). 2 consecutive propeptides follow at residues 50–116 (GRRF…LLNW) and 74–116 (PNPQ…LLNW). The segment covering 55-73 (SDQSRRKDLSDRPLPERRS) has biased composition (basic and acidic residues). Residues 55 to 77 (SDQSRRKDLSDRPLPERRSPNPQ) form a disordered region.

The protein belongs to the spexin family. As to expression, expressed in the type I glomic cells within the carotid body (at protein level). Expressed predominantly in pancreas, testis, kidney, brain and placenta. Expressed in submucosal layer of esophagus and stomach fundus.

It localises to the secreted. The protein resides in the extracellular space. The protein localises to the cytoplasmic vesicle. It is found in the secretory vesicle. Its function is as follows. Plays a role as a central modulator of cardiovascular and renal function and nociception. Also plays a role in energy metabolism and storage. Inhibits adrenocortical cell proliferation with minor stimulation on corticosteroid release. Acts as a ligand for galanin receptors GALR2 and GALR3. Intracerebroventricular administration of the peptide induces an increase in arterial blood pressure, a decrease in both heart rate and renal excretion and delayed natriuresis. Intraventricular administration of the peptide induces antinociceptive activity. Also induces contraction of muscarinic-like stomach smooth muscles. Intraperitoneal administration of the peptide induces a reduction in food consumption and body weight. Inhibits long chain fatty acid uptake into adipocytes. In terms of biological role, intracerebroventricular administration of the peptide induces a decrease in heart rate, but no change in arterial pressure, and an increase in urine flow rate. Intraventricular administration of the peptide induces antinociceptive activity. In Homo sapiens (Human), this protein is Spexin (SPX).